The chain runs to 278 residues: Large ribosomal subunit protein uL2 (278 aa).

Residues 201–278 (HGNINDGKAG…IMRSRHQRKK (78 aa)) are disordered. The segment covering 210–221 (GRSRWRGKRPHV) has biased composition (basic residues).

The protein belongs to the universal ribosomal protein uL2 family. As to quaternary structure, part of the 50S ribosomal subunit. Forms a bridge to the 30S subunit in the 70S ribosome.

One of the primary rRNA binding proteins. Required for association of the 30S and 50S subunits to form the 70S ribosome, for tRNA binding and peptide bond formation. It has been suggested to have peptidyltransferase activity; this is somewhat controversial. Makes several contacts with the 16S rRNA in the 70S ribosome. This is Large ribosomal subunit protein uL2 from Agrobacterium fabrum (strain C58 / ATCC 33970) (Agrobacterium tumefaciens (strain C58)).